A 29-amino-acid polypeptide reads, in one-letter code: Inorganic pyrophosphatase (29 aa).

Its subcellular location is the periplasm. It catalyses the reaction diphosphate + H2O = 2 phosphate + H(+). Inorganic pyrophosphatase is an essential enzyme for the activation of sulfate by sulfate reducing bacteria. This is a high activity pyrophosphatase. The polypeptide is Inorganic pyrophosphatase (Nitratidesulfovibrio vulgaris (strain ATCC 29579 / DSM 644 / CCUG 34227 / NCIMB 8303 / VKM B-1760 / Hildenborough) (Desulfovibrio vulgaris)).